A 933-amino-acid polypeptide reads, in one-letter code: Isoleucine--tRNA ligase (933 aa).

A 'HIGH' region motif is present at residues 57–67 (PYANGNIHVGH). L-isoleucyl-5'-AMP is bound at residue glutamate 554. A 'KMSKS' region motif is present at residues 595–599 (KMSKS). Lysine 598 is an ATP binding site.

Belongs to the class-I aminoacyl-tRNA synthetase family. IleS type 1 subfamily. Monomer.

It localises to the cytoplasm. It carries out the reaction tRNA(Ile) + L-isoleucine + ATP = L-isoleucyl-tRNA(Ile) + AMP + diphosphate. Its function is as follows. Catalyzes the attachment of isoleucine to tRNA(Ile). As IleRS can inadvertently accommodate and process structurally similar amino acids such as valine, to avoid such errors it has two additional distinct tRNA(Ile)-dependent editing activities. One activity is designated as 'pretransfer' editing and involves the hydrolysis of activated Val-AMP. The other activity is designated 'posttransfer' editing and involves deacylation of mischarged Val-tRNA(Ile). This chain is Isoleucine--tRNA ligase, found in Streptococcus pyogenes serotype M28 (strain MGAS6180).